We begin with the raw amino-acid sequence, 176 residues long: Ferritin, higher subunit (176 aa).

Positions 7-156 (QNFHRDCEAA…DYITNLKRLG (150 aa)) constitute a Ferritin-like diiron domain. 6 residues coordinate Fe cation: glutamate 24, glutamate 58, glutamate 59, histidine 62, glutamate 104, and glutamine 138.

Belongs to the ferritin family. As to quaternary structure, oligomer of 24 subunits. The functional molecule is roughly spherical and contains a central cavity into which the polymeric mineral iron core is deposited.

It catalyses the reaction 4 Fe(2+) + O2 + 4 H(+) = 4 Fe(3+) + 2 H2O. Stores iron in a soluble, non-toxic, readily available form. Important for iron homeostasis. Has ferroxidase activity. Iron is taken up in the ferrous form and deposited as ferric hydroxides after oxidation. The polypeptide is Ferritin, higher subunit (Aquarana catesbeiana (American bullfrog)).